The primary structure comprises 90 residues: Probable Fe(2+)-trafficking protein (90 aa).

Belongs to the Fe(2+)-trafficking protein family.

Could be a mediator in iron transactions between iron acquisition and iron-requiring processes, such as synthesis and/or repair of Fe-S clusters in biosynthetic enzymes. The polypeptide is Probable Fe(2+)-trafficking protein (Nitrosomonas eutropha (strain DSM 101675 / C91 / Nm57)).